Consider the following 113-residue polypeptide: Mediator of RNA polymerase II transcription subunit 11 (113 aa).

The protein belongs to the Mediator complex subunit 11 family. In terms of assembly, component of the Mediator complex.

Its subcellular location is the nucleus. Its function is as follows. Component of the Mediator complex, a coactivator involved in the regulated transcription of nearly all RNA polymerase II-dependent genes. Mediator functions as a bridge to convey information from gene-specific regulatory proteins to the basal RNA polymerase II transcription machinery. Mediator is recruited to promoters by direct interactions with regulatory proteins and serves as a scaffold for the assembly of a functional pre-initiation complex with RNA polymerase II and the general transcription factors. The protein is Mediator of RNA polymerase II transcription subunit 11 (MED11) of Eremothecium gossypii (strain ATCC 10895 / CBS 109.51 / FGSC 9923 / NRRL Y-1056) (Yeast).